The sequence spans 474 residues: Synaptotagmin-17 (474 aa).

Residues tryptophan 60–leucine 112 form a disordered region. Residues serine 96–leucine 112 show a composition bias toward low complexity. Serine 118 and serine 119 each carry phosphoserine. C2 domains are found at residues glutamine 184–lysine 310 and glutamate 321–histidine 455.

It belongs to the synaptotagmin family. Expressed abundantly in brain (frontal and temporal lobes, hippocampus, hypothalamus, amygdala, substantia nigra, and pituitary), kidney, and prostate. Expressed in fetal brain, kidney and lung. Expressed in melanocytes.

Its subcellular location is the membrane. In terms of biological role, plays a role in dendrite formation by melanocytes. The polypeptide is Synaptotagmin-17 (SYT17) (Homo sapiens (Human)).